The primary structure comprises 58 residues: uncharacterized protein (58 aa).

This is an uncharacterized protein from Bacillus subtilis (strain 168).